We begin with the raw amino-acid sequence, 175 residues long: Large ribosomal subunit protein uL10 (175 aa).

This sequence belongs to the universal ribosomal protein uL10 family. Part of the ribosomal stalk of the 50S ribosomal subunit. The N-terminus interacts with L11 and the large rRNA to form the base of the stalk. The C-terminus forms an elongated spine to which L12 dimers bind in a sequential fashion forming a multimeric L10(L12)X complex.

In terms of biological role, forms part of the ribosomal stalk, playing a central role in the interaction of the ribosome with GTP-bound translation factors. The sequence is that of Large ribosomal subunit protein uL10 from Desulfotalea psychrophila (strain LSv54 / DSM 12343).